A 421-amino-acid polypeptide reads, in one-letter code: Voltage-dependent calcium channel gamma-8 subunit (421 aa).

Helical transmembrane passes span 19-39, 127-147, 157-177, and 207-227; these read VQVLLTTIGAFAAFGLMTIAI, SSIFPILSAILLLLGGVCVAA, IILGAGILFVAAGLSNIIGVI, and FGGLSFILAEVIGVLAVNIYI. Phosphoserine is present on residues Ser251 and Ser254. The segment at 271-304 is disordered; sequence RRSRSSSRGSSEASPSRDASPGGPGGPGFASTDI. Low complexity predominate over residues 276 to 287; it reads SSRGSSEASPSR. A helical transmembrane segment spans residues 318–338; it reads VAAGLASAGGGGGGAGVGAYG. 2 disordered regions span residues 342–363 and 378–421; these read GAAGGGGTGSERDRGSSAGFLT and VTVT…TTPV. The segment covering 384 to 397 has biased composition (pro residues); sequence PAAPAPAPPAPAAP. Polar residues predominate over residues 408–421; sequence ASNTNTLNRKTTPV.

This sequence belongs to the PMP-22/EMP/MP20 family. CACNG subfamily. In terms of assembly, interacts with CACNA1C. Identified in a complex with the L-type calcium channel subunits CACNA1C, CACNA2D1 and either CACNB1 or CACNB2. Acts as an auxiliary subunit for AMPA-selective glutamate receptors (AMPARs). Found in a complex with GRIA1, GRIA2, GRIA3, GRIA4, CNIH2, CNIH3, CACNG2, CACNG3, CACNG4, CACNG5 and CACNG7. Interacts with CNIH2. Found in a complex with GRIA1, GRIA2, GRIA3, GRIA4, DLG4 and CNIH2. Post-translationally, palmitoylated. Probably palmitoylated by ZDHHC3 and ZDHHC7.

It is found in the cell membrane. Its subcellular location is the postsynaptic density membrane. In terms of biological role, regulates the activity of L-type calcium channels that contain CACNA1C as pore-forming subunit. Regulates the trafficking and gating properties of AMPA-selective glutamate receptors (AMPARs). Promotes their targeting to the cell membrane and synapses and modulates their gating properties by slowing their rates of activation, deactivation and desensitization and by mediating their resensitization. Does not show subunit-specific AMPA receptor regulation and regulates all AMPAR subunits. Thought to stabilize the calcium channel in an inactivated (closed) state. This Rattus norvegicus (Rat) protein is Voltage-dependent calcium channel gamma-8 subunit.